A 362-amino-acid chain; its full sequence is S-adenosylmethionine-dependent nucleotide dehydratase RSAD2 (362 aa).

Positions 49 to 71 (QQLQGKTEAGEPPRAQEDSHLPT) are disordered. A compositionally biased stretch (basic and acidic residues) spans 56–68 (EAGEPPRAQEDSH). The Radical SAM core domain occupies 70 to 290 (PTTPTSVNYH…LDRHKDVSCL (221 aa)). 3 residues coordinate [4Fe-4S] cluster: Cys-84, Cys-88, and Cys-91. The residue at position 198 (Lys-198) is an N6-acetyllysine. A Glycyl lysine isopeptide (Lys-Gly) (interchain with G-Cter in ubiquitin) cross-link involves residue Lys-207.

The protein belongs to the radical SAM superfamily. RSAD2 family. In terms of assembly, homodimer. Interacts with IRAK1 and TRAF6. Interacts with FPPS. Interacts with HADHB. Interacts (via C-terminus) with VAPA/VAP33 (via C-terminus). The cofactor is [4Fe-4S] cluster. In terms of processing, acetylated by HAT1. HAT1-mediated acetylation of Lys-198 in turn recruits UBE4A that stimulates RSAD2 polyubiquitination leading to proteasomal degradation. Post-translationally, 'Lys-6'-linked polyubiquitination at Lys-207 leads to RSAD2 protein degradation.

The protein resides in the endoplasmic reticulum membrane. Its subcellular location is the golgi apparatus. The protein localises to the endoplasmic reticulum. It localises to the lipid droplet. It is found in the mitochondrion. The protein resides in the mitochondrion inner membrane. Its subcellular location is the mitochondrion outer membrane. The enzyme catalyses CTP + AH2 + S-adenosyl-L-methionine = 3'-deoxy-3',4'-didehydro-CTP + 5'-deoxyadenosine + L-methionine + A + H2O + H(+). With respect to regulation, IRAK1 and TRAF6 synergistically activate RSAD2 increasing its activity with CTP as substrate about 10-fold. Interferon-inducible antiviral protein which plays a major role in the cell antiviral state induced by type I and type II interferon. Catalyzes the conversion of cytidine triphosphate (CTP) to 3'-deoxy-3',4'-didehydro-CTP (ddhCTP) via a SAM-dependent radical mechanism. In turn, ddhCTP acts as a chain terminator for the RNA-dependent RNA polymerases from multiple viruses and directly inhibits viral replication. Therefore, inhibits a wide range of DNA and RNA viruses. Also promotes TLR7 and TLR9-dependent production of IFN-beta production in plasmacytoid dendritic cells (pDCs) by facilitating 'Lys-63'-linked ubiquitination of IRAK1 by TRAF6. Plays a role in CD4+ T-cells activation and differentiation. Facilitates T-cell receptor (TCR)-mediated GATA3 activation and optimal T-helper 2 (Th2) cytokine production by modulating NFKB1 and JUNB activities. Can inhibit secretion of soluble proteins. The protein is S-adenosylmethionine-dependent nucleotide dehydratase RSAD2 of Sus scrofa (Pig).